A 127-amino-acid chain; its full sequence is MAKQSLDVSSDRRKARKAYFTAPSSERRVLLSAPLSKELRAQYGIKALPIRRDDEVLVVRGSKKGQEGKISSVYRLKFAVQVDKVTKEKVNGASVPINLHPSKLVITKLHLDKDRKALIQRKGGKLE.

The protein belongs to the universal ribosomal protein uL24 family. As to quaternary structure, component of the large ribosomal subunit (LSU). Mature yeast ribosomes consist of a small (40S) and a large (60S) subunit. The 40S small subunit contains 1 molecule of ribosomal RNA (18S rRNA) and 33 different proteins (encoded by 57 genes). The large 60S subunit contains 3 rRNA molecules (25S, 5.8S and 5S rRNA) and 46 different proteins (encoded by 81 genes).

The protein localises to the cytoplasm. In terms of biological role, component of the ribosome, a large ribonucleoprotein complex responsible for the synthesis of proteins in the cell. The small ribosomal subunit (SSU) binds messenger RNAs (mRNAs) and translates the encoded message by selecting cognate aminoacyl-transfer RNA (tRNA) molecules. The large subunit (LSU) contains the ribosomal catalytic site termed the peptidyl transferase center (PTC), which catalyzes the formation of peptide bonds, thereby polymerizing the amino acids delivered by tRNAs into a polypeptide chain. The nascent polypeptides leave the ribosome through a tunnel in the LSU and interact with protein factors that function in enzymatic processing, targeting, and the membrane insertion of nascent chains at the exit of the ribosomal tunnel. The protein is Large ribosomal subunit protein uL24B of Saccharomyces cerevisiae (strain ATCC 204508 / S288c) (Baker's yeast).